We begin with the raw amino-acid sequence, 165 residues long: Glycine cleavage system H protein, mitochondrial (165 aa).

One can recognise a Lipoyl-binding domain in the interval 57 to 139; the sequence is NAIVGISSYA…YEKGWLFKVD (83 aa). Residue Lys-98 is modified to N6-lipoyllysine.

It belongs to the GcvH family. As to quaternary structure, the glycine cleavage system is composed of four proteins: P, T, L and H. (R)-lipoate serves as cofactor.

The protein localises to the mitochondrion. Its function is as follows. The glycine cleavage system catalyzes the degradation of glycine. The H protein shuttles the methylamine group of glycine from the P protein to the T protein. The sequence is that of Glycine cleavage system H protein, mitochondrial (ppl) from Drosophila melanogaster (Fruit fly).